The chain runs to 465 residues: Argininosuccinate lyase (465 aa).

This sequence belongs to the lyase 1 family. Argininosuccinate lyase subfamily.

Its subcellular location is the cytoplasm. It carries out the reaction 2-(N(omega)-L-arginino)succinate = fumarate + L-arginine. It functions in the pathway amino-acid biosynthesis; L-arginine biosynthesis; L-arginine from L-ornithine and carbamoyl phosphate: step 3/3. This chain is Argininosuccinate lyase, found in Deinococcus deserti (strain DSM 17065 / CIP 109153 / LMG 22923 / VCD115).